A 198-amino-acid polypeptide reads, in one-letter code: Probable GTP-binding protein EngB (198 aa).

One can recognise an EngB-type G domain in the interval 21–195; sequence NFSEVAFLGR…EDIIINQTLG (175 aa). GTP is bound by residues 29–36, 56–60, 81–84, 151–154, and 174–176; these read GRSNVGKS, GKTQL, DLPG, TKCD, and VSN. Residues serine 36 and threonine 58 each contribute to the Mg(2+) site.

The protein belongs to the TRAFAC class TrmE-Era-EngA-EngB-Septin-like GTPase superfamily. EngB GTPase family. The cofactor is Mg(2+).

Its function is as follows. Necessary for normal cell division and for the maintenance of normal septation. This chain is Probable GTP-binding protein EngB, found in Campylobacter jejuni (strain RM1221).